The chain runs to 287 residues: Agamous-like MADS-box protein AGL53 (287 aa).

The 49-residue stretch at 30–78 (STAKKTTNLSMREQTMFKKALELSTLCNIDVCVIYYGRDGKLIKTWPED) folds into the MADS-box domain. A disordered region spans residues 151 to 171 (EFGQTRAVSSTTNPLSPPPSL).

In terms of assembly, interacts with MEE14/CBP1.

It is found in the nucleus. Functionally, probable transcription factor that may function in the maintenance of the proper function of the central cell in pollen tube attraction. This chain is Agamous-like MADS-box protein AGL53, found in Arabidopsis thaliana (Mouse-ear cress).